A 309-amino-acid chain; its full sequence is Protein FdhE (309 aa).

The protein belongs to the FdhE family.

Its subcellular location is the cytoplasm. Functionally, necessary for formate dehydrogenase activity. This Escherichia coli O139:H28 (strain E24377A / ETEC) protein is Protein FdhE.